A 508-amino-acid chain; its full sequence is Fasciclin-3 (508 aa).

The first 20 residues, 1–20 (MSRIVFICLAAILTDALTWA), serve as a signal peptide directing secretion. Residue Gln21 is modified to Pyrrolidone carboxylic acid. Over 21–346 (QVNVEPNTAL…SSKPPSSSLD (326 aa)) the chain is Extracellular. Residues 44–106 (GRSINYCRIE…NGQVKCSLGV (63 aa)) enclose the Ig-like V-type domain. Ig-like C2-type domains lie at 126-223 (PIIE…ESVP) and 236-310 (APVH…GLTL). A disulfide bond links Cys150 and Cys211. N-linked (GlcNAc...) asparagine glycans are attached at residues Asn160, Asn257, and Asn300. A helical transmembrane segment spans residues 347–370 (VAAIVGIVVAVAVLVLVVLLIVFA). Topologically, residues 371–508 (RATGRWCFGG…QSTSPVWTFK (138 aa)) are cytoplasmic. A disordered region spans residues 381 to 439 (KSIKTPTNETSDTESADIKATSTATATTTMGGVGVSAEEEETVNEQESPQEQQQQQQKK). Ser382 is subject to Phosphoserine. 2 stretches are compositionally biased toward low complexity: residues 400 to 409 (ATSTATATTT) and 425 to 437 (EQES…QQQQ). Ser459 is subject to Phosphoserine.

Expressed on different subsets of axon bundles (fascicles) in insect embryos.

It is found in the membrane. Functionally, mediates cell adhesion in a Ca(2+)-independent manner. It plays a role in axon outgrowth, guidance and fasciculation of the developing nervous system. Function in neurons is essential for adult survival, and is important for climbing behavior and activity. In Drosophila melanogaster (Fruit fly), this protein is Fasciclin-3 (Fas3).